Consider the following 388-residue polypeptide: MNARKAPEFPAWPQYDDAERNGLVRALEQGQWWRMGGDEVNSFEREFAAHHGAAHALAVTNGTHALELALQVMGVGPGTEVIVPAFTFISSSQAAQRLGAVTVPVDVDAATYNLDPEAVAAAVTPRTKVIMPVHMAGLMADMDALAKISADTGVPLLQDAAHAHGARWQGKRVGELDSIATFSFQNGKLMTAGEGGAVVFPDGETEKYETAFLRHSCGRPRDDRRYFHKIAGSNMRLNEFSASVLRAQLARLDEQIAVRDERWTLLSRLLGAIDGVVPQGGDVRADRNSHYMAMFRIPGLTEERRNALVDRLVEAGLPAFAAFRAIYRTDAFWELGAPDESVDAIARRCPNTDAISSDCVWLHHRVLLAGEPELHATAEIIADAVARA.

The residue at position 188 (lysine 188) is an N6-(pyridoxal phosphate)lysine.

The protein belongs to the degT/dnrJ/eryC1 family. As to quaternary structure, homodimer. Can interact with RifL. It depends on pyridoxal 5'-phosphate as a cofactor.

It catalyses the reaction 5-deoxy-5-amino-3-dehydroshikimate = 3-amino-5-hydroxybenzoate + H2O + H(+). The catalysed reaction is UDP-3-oxo-alpha-D-glucose + L-glutamine = UDP-alpha-D-kanosamine + 2-oxoglutaramate. Its pathway is antibiotic biosynthesis; rifamycin B biosynthesis. With respect to regulation, AHBA synthase activity is activated by 3-deoxy-D-arabinoheptulosonic acid 7-phosphate (DAHP), an intermediate in the shikimate pathway, and is irreversibly inhibited by gabaculine (5-amino-1,3-cyclohexadiene-1-carboxylate). In terms of biological role, catalyzes the dehydration and aromatization of 5-amino-5-deoxy-3-dehydroshikimate (aminoDHS) to 3-amino-5-hydroxybenzoate (AHBA), a compound that then serves as the starter unit for the assembly of a polyketide during the biosynthesis of rifamycin B and other ansamycin antibiotics. Cannot utilize 5-deoxy-5-amino-3-dehydroquinate (aminoDHQ), 5-deoxy-5-aminoshikimate (aminoSA), quinate, 3-dehydroquinate, or 3-dehydroshikimate (DHS) as substrate. Functionally, in a complex with RifL, RifK may have a second function in the AHBA pathway, acting as a transaminase introducing the nitrogen into the first pathway intermediate, UDP-3-keto-D-glucose, to give UDP-kanosamine. Appears to use glutamine as the nitrogen donor; NH(4)(+) or asparagine are 30% less effective as nitrogen donors and neither glutamate nor aspartate show activity. This is 3-amino-5-hydroxybenzoate synthase (rifK) from Amycolatopsis mediterranei (strain S699) (Nocardia mediterranei).